A 229-amino-acid polypeptide reads, in one-letter code: Large ribosomal subunit protein uL1 (229 aa).

The protein belongs to the universal ribosomal protein uL1 family. In terms of assembly, part of the 50S ribosomal subunit.

In terms of biological role, binds directly to 23S rRNA. The L1 stalk is quite mobile in the ribosome, and is involved in E site tRNA release. Protein L1 is also a translational repressor protein, it controls the translation of the L11 operon by binding to its mRNA. The polypeptide is Large ribosomal subunit protein uL1 (Pelagibacter ubique (strain HTCC1062)).